Consider the following 357-residue polypeptide: MLDHITPFFALVAFFLVLMPFAWHIKSKNVGLIMLSIWLMLGNLDNFVNSMVWWKTTADLAPAYCELSVRLRHLLFIAIPASNLAIARKLESIASTRQVRAGPGDHRRAVIIDLLICLGIPIIYTSLMIVNQSNRYGILEEAGCWPMMVFSWLWVLLVAAPVIVVSLCSAVYSALAFRWFWVRRRQFQAVLASSASTINRSHYVRLLLLTAIDMLLFFPIYVGTIAAQIKSSISIPYGSWSSVHTGFNQIPQYPASLVLMENTFQRNLILARLVCPLSAYIFFAMFGLGLEVRQGYKEAFHRALLFCRLRKEPKASALQHVVADIEVVTFRSHDTFDANTSTKSEKSDIDMRGSEAA.

A run of 7 helical transmembrane segments spans residues 5–25, 32–52, 67–90, 110–130, 145–165, 206–226, and 268–288; these read ITPFFALVAFFLVLMPFAWHI, LIMLSIWLMLGNLDNFVNSMV, LSVRLRHLLFIAIPASNLAIARKL, VIIDLLICLGIPIIYTSLMIV, WPMMVFSWLWVLLVAAPVIVV, LLLLTAIDMLLFFPIYVGTIA, and LILARLVCPLSAYIFFAMFGL. The segment at 338-357 is disordered; it reads ANTSTKSEKSDIDMRGSEAA. Basic and acidic residues predominate over residues 343–357; the sequence is KSEKSDIDMRGSEAA.

The protein belongs to the G-protein coupled receptor 4 family.

It localises to the membrane. Its function is as follows. Receptor for the A2 pheromone, a prenylated mating factor. This Mycosarcoma maydis (Corn smut fungus) protein is Pheromone receptor 1 (PRA1).